A 175-amino-acid chain; its full sequence is Cytochrome c homolog (175 aa).

Residues 1–8 (MTGKELNK) lie on the Cytoplasmic side of the membrane. The chain crosses the membrane as a helical; Signal-anchor span at residues 9-29 (IVAAILFASLIAMIVRFVANI). Over 30–175 (LYKPNLQVLN…LFLKNYVHDK (146 aa)) the chain is Periplasmic. Heme c-binding residues include cysteine 84, cysteine 87, histidine 88, and methionine 150.

It belongs to the cytochrome c family. In terms of processing, binds 1 heme c group covalently per subunit.

Its subcellular location is the cell membrane. In terms of biological role, may be involved in electron transfer from bc1 complex to aa3. This chain is Cytochrome c homolog (cycM), found in Rickettsia typhi (strain ATCC VR-144 / Wilmington).